Consider the following 1058-residue polypeptide: Carbamoyl phosphate synthase large chain (1058 aa).

The tract at residues 1–401 (MPKRKDIQKI…SLLKACRSLE (401 aa)) is carboxyphosphate synthetic domain. 12 residues coordinate ATP: Arg129, Arg169, Gly175, Gly176, Arg208, Ile210, Glu215, Gly241, Ile242, His243, Gln284, and Glu298. The ATP-grasp 1 domain occupies 133 to 327 (KQLMQELDQP…IAKLAAKIAV (195 aa)). Gln284, Glu298, and Asn300 together coordinate Mg(2+). Residues Gln284, Glu298, and Asn300 each contribute to the Mn(2+) site. The tract at residues 402–546 (IGVCHNEMTS…YSTYELENES (145 aa)) is oligomerization domain. The segment at 547–929 (VQSNKESILV…ALYKAFEANN (383 aa)) is carbamoyl phosphate synthetic domain. The ATP-grasp 2 domain occupies 671–861 (EKALKELGIP…MAQIATKLIL (191 aa)). ATP contacts are provided by Arg707, Ser746, Ile748, Glu752, Gly777, Val778, His779, Ser780, Gln820, and Glu832. 3 residues coordinate Mg(2+): Gln820, Glu832, and Asn834. 3 residues coordinate Mn(2+): Gln820, Glu832, and Asn834. One can recognise an MGS-like domain in the interval 930–1058 (SHLSEFGQIV…ESRCFNIEAI (129 aa)). Residues 930 to 1058 (SHLSEFGQIV…ESRCFNIEAI (129 aa)) are allosteric domain.

It belongs to the CarB family. In terms of assembly, composed of two chains; the small (or glutamine) chain promotes the hydrolysis of glutamine to ammonia, which is used by the large (or ammonia) chain to synthesize carbamoyl phosphate. Tetramer of heterodimers (alpha,beta)4. Mg(2+) is required as a cofactor. Mn(2+) serves as cofactor.

It catalyses the reaction hydrogencarbonate + L-glutamine + 2 ATP + H2O = carbamoyl phosphate + L-glutamate + 2 ADP + phosphate + 2 H(+). The catalysed reaction is hydrogencarbonate + NH4(+) + 2 ATP = carbamoyl phosphate + 2 ADP + phosphate + 2 H(+). It functions in the pathway amino-acid biosynthesis; L-arginine biosynthesis; carbamoyl phosphate from bicarbonate: step 1/1. Its pathway is pyrimidine metabolism; UMP biosynthesis via de novo pathway; (S)-dihydroorotate from bicarbonate: step 1/3. Functionally, large subunit of the glutamine-dependent carbamoyl phosphate synthetase (CPSase). CPSase catalyzes the formation of carbamoyl phosphate from the ammonia moiety of glutamine, carbonate, and phosphate donated by ATP, constituting the first step of 2 biosynthetic pathways, one leading to arginine and/or urea and the other to pyrimidine nucleotides. The large subunit (synthetase) binds the substrates ammonia (free or transferred from glutamine from the small subunit), hydrogencarbonate and ATP and carries out an ATP-coupled ligase reaction, activating hydrogencarbonate by forming carboxy phosphate which reacts with ammonia to form carbamoyl phosphate. The sequence is that of Carbamoyl phosphate synthase large chain from Streptococcus pyogenes serotype M3 (strain SSI-1).